The sequence spans 347 residues: Tetraacyldisaccharide 4'-kinase (347 aa).

Phe-65–Thr-72 provides a ligand contact to ATP.

Belongs to the LpxK family.

It catalyses the reaction a lipid A disaccharide + ATP = a lipid IVA + ADP + H(+). Its pathway is glycolipid biosynthesis; lipid IV(A) biosynthesis; lipid IV(A) from (3R)-3-hydroxytetradecanoyl-[acyl-carrier-protein] and UDP-N-acetyl-alpha-D-glucosamine: step 6/6. Its function is as follows. Transfers the gamma-phosphate of ATP to the 4'-position of a tetraacyldisaccharide 1-phosphate intermediate (termed DS-1-P) to form tetraacyldisaccharide 1,4'-bis-phosphate (lipid IVA). The sequence is that of Tetraacyldisaccharide 4'-kinase from Janthinobacterium sp. (strain Marseille) (Minibacterium massiliensis).